Here is a 362-residue protein sequence, read N- to C-terminus: Adenosine deaminase (362 aa).

Zn(2+) contacts are provided by H19 and H21. Substrate contacts are provided by H21, D23, and G181. H208 serves as a coordination point for Zn(2+). Catalysis depends on E211, which acts as the Proton donor. Position 300 (D300) interacts with Zn(2+).

It belongs to the metallo-dependent hydrolases superfamily. Adenosine and AMP deaminases family. Adenosine deaminase subfamily. Requires Zn(2+) as cofactor.

It carries out the reaction adenosine + H2O + H(+) = inosine + NH4(+). The catalysed reaction is 2'-deoxyadenosine + H2O + H(+) = 2'-deoxyinosine + NH4(+). In terms of biological role, catalyzes the hydrolytic deamination of adenosine and 2-deoxyadenosine. This is Adenosine deaminase from Mycobacteroides abscessus (strain ATCC 19977 / DSM 44196 / CCUG 20993 / CIP 104536 / JCM 13569 / NCTC 13031 / TMC 1543 / L948) (Mycobacterium abscessus).